The sequence spans 298 residues: Elongation factor Ts (298 aa).

The interval 79–82 (TDFV) is involved in Mg(2+) ion dislocation from EF-Tu.

Belongs to the EF-Ts family.

The protein resides in the cytoplasm. In terms of biological role, associates with the EF-Tu.GDP complex and induces the exchange of GDP to GTP. It remains bound to the aminoacyl-tRNA.EF-Tu.GTP complex up to the GTP hydrolysis stage on the ribosome. The sequence is that of Elongation factor Ts (tsf) from Mycoplasma genitalium (strain ATCC 33530 / DSM 19775 / NCTC 10195 / G37) (Mycoplasmoides genitalium).